Here is a 313-residue protein sequence, read N- to C-terminus: MKSGFSHITVLLEEAVDALSIREGGCYLDGTFGRGGHSRLILGRLGAGGILLGFDKDPQAVAAGLALATEDARFVIVQRSFAELADEMKMRGLVGKVSGVLLDLGVSSPQLDDPERGFSFLNDGPLDMRMDPGRGLSAAEWLAQASCEEIAHVFKDYGEERFARRMAQAVVQRRQERPFERTADLAQVLAAANPAWEKGKNPATRAFQGLRIHINNELGDLEQGLDAALEVLEVGGRLAVISFHSLEDRIVKRFMRRQVKGEADKLPRDLPIRPAAFEPRLKLIGKPRYASESELKTNPRARSAIMRVAEKLR.

Residues 35–37 (GGH), aspartate 55, phenylalanine 81, aspartate 103, and glutamine 110 each bind S-adenosyl-L-methionine.

The protein belongs to the methyltransferase superfamily. RsmH family.

Its subcellular location is the cytoplasm. It catalyses the reaction cytidine(1402) in 16S rRNA + S-adenosyl-L-methionine = N(4)-methylcytidine(1402) in 16S rRNA + S-adenosyl-L-homocysteine + H(+). Functionally, specifically methylates the N4 position of cytidine in position 1402 (C1402) of 16S rRNA. The chain is Ribosomal RNA small subunit methyltransferase H from Azotobacter vinelandii (strain DJ / ATCC BAA-1303).